The chain runs to 521 residues: MIKQALISVSDKSGIVDFAKSLSDLGVKILSTGGTAKLLADAGLSVTEVADYTGFPEMLDGRVKTLHPKVHGGILARRDLPEHMAALEKHDIPTIDLLVVNLYPFVQTVSKEECSLEDAIENIDIGGPTMLRSAAKNHRDVTVVVDPADYAVVLDEMRANSNAVSYKTNFRLATKVFAHTAQYDGAITNYLTSLTDELQHSSRNTYPATFNLAFDKVQDLRYGENPHQSAAFYRDLSVPAGALANYNQLQGKELSYNNIADSDAAWECVKTFDVPACVIVKHANPCGVALGADAHDAYAKALQTDPTSAFGGIIAFNREVDEAAAQAVAKQFVEVLIAPSFSAEARQVFAAKQNVRLLEIALGEGHNAFDLKRVGGGLLVQSLDSKNVQPHELRVVTKRHPTPKEMDDLLFAWRVAKFVKSNAIVFCGNGMTLGVGAGQMSRVDSARIASIKAQNAGLTLAGSAVASDAFFPFRDGLDVVVAAGASCVIQPGGSMRDDEVVGAADEHNIAMVLTGVRHFRH.

Positions 1–145 constitute an MGS-like domain; it reads MIKQALISVS…KNHRDVTVVV (145 aa).

The protein belongs to the PurH family.

The enzyme catalyses (6R)-10-formyltetrahydrofolate + 5-amino-1-(5-phospho-beta-D-ribosyl)imidazole-4-carboxamide = 5-formamido-1-(5-phospho-D-ribosyl)imidazole-4-carboxamide + (6S)-5,6,7,8-tetrahydrofolate. It carries out the reaction IMP + H2O = 5-formamido-1-(5-phospho-D-ribosyl)imidazole-4-carboxamide. Its pathway is purine metabolism; IMP biosynthesis via de novo pathway; 5-formamido-1-(5-phospho-D-ribosyl)imidazole-4-carboxamide from 5-amino-1-(5-phospho-D-ribosyl)imidazole-4-carboxamide (10-formyl THF route): step 1/1. It participates in purine metabolism; IMP biosynthesis via de novo pathway; IMP from 5-formamido-1-(5-phospho-D-ribosyl)imidazole-4-carboxamide: step 1/1. This chain is Bifunctional purine biosynthesis protein PurH, found in Paraburkholderia phytofirmans (strain DSM 17436 / LMG 22146 / PsJN) (Burkholderia phytofirmans).